The following is a 310-amino-acid chain: Tagatose-6-phosphate kinase (310 aa).

The protein belongs to the carbohydrate kinase PfkB family. LacC subfamily.

It carries out the reaction D-tagatofuranose 6-phosphate + ATP = D-tagatofuranose 1,6-bisphosphate + ADP + H(+). It participates in carbohydrate metabolism; D-tagatose 6-phosphate degradation; D-glyceraldehyde 3-phosphate and glycerone phosphate from D-tagatose 6-phosphate: step 1/2. The sequence is that of Tagatose-6-phosphate kinase from Lactococcus lactis subsp. lactis (Streptococcus lactis).